Consider the following 291-residue polypeptide: AA14 family lytic polysaccharide monooxygenase (291 aa).

The N-terminal stretch at 1-17 (MLTTAILFTSLAGSAYA) is a signal peptide. Residue N141 is glycosylated (N-linked (GlcNAc...) asparagine). Cystine bridges form between C192/C197, C199/C220, and C240/C247.

The protein belongs to the polysaccharide monooxygenase AA14 family. Requires Cu(2+) as cofactor.

Its subcellular location is the secreted. Functionally, lytic polysaccharide monooxygenase (LPMO) that is active against heteroxylan, xyloglucan and cellulose in beta-cellulose and released native oligosaccharides and corresponding C1- and/or C4-oxidized products. May act mainly on heteroxylan with numerous arabinosyl substituents between cellulose fibers rather than on recalcitrant xylan tightly associated with cellulose. Catalysis by LPMOs requires the reduction of the active-site copper from Cu(II) to Cu(I) by a reducing agent and H(2)O(2) or O(2) as a cosubstrate. Shows a branched chain preference, and has synergistic effects with the Penicillium parvum debranching enzyme ABF62C in an enzyme- and ascorbic acid-dependent manner. Also has synergistic effects with the Penicillium parvum GH10 endoxylanase XYN1, and the degree of synergy was greater with step-by-step addition than with simultaneous addition. This chain is AA14 family lytic polysaccharide monooxygenase, found in Sordaria brevicollis.